Reading from the N-terminus, the 258-residue chain is MLMVVSPAKSLDFESPLPSGLPATRPPMLDESARLADILRQMAPQDIAGLMQVSDKIAALNVARFAEWHADYSAPQARQAVFAFNGDVYEGLDAASMDRAGLDWLQPRLNILSGLYGLLRPLDLMLPYRLEMGTRLANPRGKDLYAFWGERITTELNARLQQDGSQVLVNLASDEYFRSVKPAQLAATVWTPVFRDSKAGGPYKIVSFWAKRARGLMVRWMAEQRIESPDDLRAFDVEGYRFNPAASNGTTLVFLRDH.

The protein belongs to the UPF0246 family.

In Laribacter hongkongensis (strain HLHK9), this protein is UPF0246 protein LHK_02295.